Here is a 38-residue protein sequence, read N- to C-terminus: Mu-agatoxin-Hc1c (38 aa).

4 disulfides stabilise this stretch: Cys-3–Cys-19, Cys-10–Cys-24, Cys-18–Cys-34, and Cys-26–Cys-32. Ser-38 carries the post-translational modification Serine amide.

It belongs to the neurotoxin 07 (Beta/delta-agtx) family. 02 (aga-3) subfamily. In terms of tissue distribution, expressed by the venom gland.

The protein localises to the secreted. Its function is as follows. Insecticidal neurotoxin that induces irreversible neuromuscular blockade in house crickets (A.domesticus). Modifies presynaptic voltage-gated sodium channels (Nav), causing them to open at the normal resting potential of the nerve. This leads to spontaneous release of neurotransmitter and repetitive action potentials in motor neurons. The polypeptide is Mu-agatoxin-Hc1c (Hololena curta (Funnel-web spider)).